The following is a 304-amino-acid chain: Nod factor export ATP-binding protein I (304 aa).

An ABC transporter domain is found at 6-236; that stretch reads IDFQQVEKRY…EIGCDVIEIY (231 aa). Position 38–45 (38–45) interacts with ATP; the sequence is GPNGAGKT.

The protein belongs to the ABC transporter superfamily. Lipooligosaccharide exporter (TC 3.A.1.102) family. In terms of assembly, the complex is composed of two ATP-binding proteins (NodI) and two transmembrane proteins (NodJ).

It localises to the cell inner membrane. Its function is as follows. Part of the ABC transporter complex NodIJ involved in the export of the nodulation factors (Nod factors), the bacterial signal molecules that induce symbiosis and subsequent nodulation induction. Nod factors are LCO (lipo-chitin oligosaccharide), a modified beta-1,4-linked N-acetylglucosamine oligosaccharide. This subunit is responsible for energy coupling to the transport system. This chain is Nod factor export ATP-binding protein I, found in Burkholderia pseudomallei (strain K96243).